The following is a 488-amino-acid chain: Glutamyl-tRNA(Gln) amidotransferase subunit A (488 aa).

Catalysis depends on charge relay system residues Lys77 and Ser152. Residue Ser176 is the Acyl-ester intermediate of the active site.

It belongs to the amidase family. GatA subfamily. In terms of assembly, heterotrimer of A, B and C subunits.

It carries out the reaction L-glutamyl-tRNA(Gln) + L-glutamine + ATP + H2O = L-glutaminyl-tRNA(Gln) + L-glutamate + ADP + phosphate + H(+). Allows the formation of correctly charged Gln-tRNA(Gln) through the transamidation of misacylated Glu-tRNA(Gln) in organisms which lack glutaminyl-tRNA synthetase. The reaction takes place in the presence of glutamine and ATP through an activated gamma-phospho-Glu-tRNA(Gln). The sequence is that of Glutamyl-tRNA(Gln) amidotransferase subunit A from Streptococcus pyogenes serotype M12 (strain MGAS2096).